The chain runs to 113 residues: U11-theraphotoxin-Hhn1a (113 aa).

An N-terminal signal peptide occupies residues 1–21; sequence MNTVRVTFLLVFVLAVSLGQA. The propeptide occupies 22 to 74; that stretch reads DKDENRMEMQGKTEQGKSYLDFAENLLLQKLEELEAKLLEEDSEESRNSRQKR. 3 disulfides stabilise this stretch: Cys75-Cys90, Cys82-Cys95, and Cys89-Cys110.

Belongs to the neurotoxin 14 (magi-1) family. 01 (HNTX-16) subfamily. Expressed by the venom gland.

It is found in the secreted. Functionally, probable ion channel inhibitor. The polypeptide is U11-theraphotoxin-Hhn1a (Cyriopagopus hainanus (Chinese bird spider)).